The primary structure comprises 500 residues: MPDAVKVGFVPFSTASRGTLVVFCDETLKFGRAAGKALGSSAGLVKRAAAANQFKGKSATTLDILAPEGLKADRLIVVGVGKTPALKSSDFLKLGGVIAGKVRSDNNGVTIIAELPSATMEPDLSASLASGIRLRAYKFDRYKTRKKEGDDAVNRADVSIAVADVAAAKKAFAPVNHVVNGVIIARDLVNEPPNVLYPEEFARRASRLRAMGVGIDVLDVKAMTKLGMGALLGVGQGSARPSRTVVMRWNGGKKGEPPVAFVGKGVCFDTGGISIKPANGMEEMKGDMGGAACVVGLMHALAARKAKVNAIGAIGIVENMPDGSAQRPGDIVTSMSGQTIEIINTDAEGRLVLADVLWYVARKFKPKVMIDLATLTGAIMVALGTEHAGLFSNNDELSERLTRAGLDTGERVWRMPLAPEYDKLIDSKFADMKNTGGRHGGSITAAQFLQRFVDDTPWAHLDIAGTAMGAPKSDINQSWGSGFGVRLLDRLVAEHYETKR.

Mn(2+)-binding residues include K264 and D269. K276 is a catalytic residue. Mn(2+) contacts are provided by D287, D346, and E348. Residue R350 is part of the active site.

It belongs to the peptidase M17 family. It depends on Mn(2+) as a cofactor.

It localises to the cytoplasm. It catalyses the reaction Release of an N-terminal amino acid, Xaa-|-Yaa-, in which Xaa is preferably Leu, but may be other amino acids including Pro although not Arg or Lys, and Yaa may be Pro. Amino acid amides and methyl esters are also readily hydrolyzed, but rates on arylamides are exceedingly low.. The enzyme catalyses Release of an N-terminal amino acid, preferentially leucine, but not glutamic or aspartic acids.. Presumably involved in the processing and regular turnover of intracellular proteins. Catalyzes the removal of unsubstituted N-terminal amino acids from various peptides. The chain is Probable cytosol aminopeptidase from Nitrobacter winogradskyi (strain ATCC 25391 / DSM 10237 / CIP 104748 / NCIMB 11846 / Nb-255).